Here is a 422-residue protein sequence, read N- to C-terminus: Acylglycerol kinase, mitochondrial (422 aa).

An N6-acetyllysine modification is found at lysine 6. The hydrophobic stretch occupies residues 15–31; sequence TTAGLCLLTWGGHWLYG. Residues 58–199 enclose the DAGKc domain; it reads AQVKKATVFL…LDVLQIKGEK (142 aa). A disordered region spans residues 249-271; that stretch reads QASISYTGPTERPPNEPEETPVQ.

The protein belongs to the AGK family. Component of the TIM22 complex, which core is composed of TIMM22, associated with TIMM10 (TIMM10A and/or TIMM10B), TIMM9, AGK and TIMM29. Interacts with SMIM26. Mg(2+) is required as a cofactor. In terms of tissue distribution, highly expressed in muscle, heart, kidney and brain.

It localises to the mitochondrion inner membrane. The protein localises to the mitochondrion intermembrane space. The enzyme catalyses a monoacylglycerol + ATP = a monoacyl-sn-glycero-3-phosphate + ADP + H(+). It carries out the reaction a 1,2-diacyl-sn-glycerol + ATP = a 1,2-diacyl-sn-glycero-3-phosphate + ADP + H(+). It catalyses the reaction an N-acylsphing-4-enine + ATP = an N-acylsphing-4-enine 1-phosphate + ADP + H(+). The catalysed reaction is 1-(9Z-octadecenoyl)-sn-glycerol + ATP = 1-(9Z-octadecenoyl)-sn-glycero-3-phosphate + ADP + H(+). The enzyme catalyses 1,2-di-(9Z-octadecenoyl)-sn-glycerol + ATP = 1,2-di-(9Z-octadecenoyl)-sn-glycero-3-phosphate + ADP + H(+). It carries out the reaction a 1-acyl-sn-glycerol + ATP = a 1-acyl-sn-glycero-3-phosphate + ADP + H(+). It catalyses the reaction 1-hexadecanoyl-sn-glycerol + ATP = 1-hexadecanoyl-sn-glycero-3-phosphate + ADP + H(+). The catalysed reaction is a 2-acylglycerol + ATP = a 2-acyl-sn-glycerol 3-phosphate + ADP + H(+). The enzyme catalyses 2-(5Z,8Z,11Z,14Z-eicosatetraenoyl)-glycerol + ATP = 2-(5Z,8Z,11Z,14Z-eicosatetraenoyl)-sn-glycero-3-phosphate + ADP + H(+). It carries out the reaction 1-(5Z,8Z,11Z,14Z-eicosatetraenoyl)-sn-glycerol + ATP = 1-(5Z,8Z,11Z,14Z-eicosatetraenoyl)-sn-glycero-3-phosphate + ADP + H(+). It catalyses the reaction N-(hexanoyl)sphing-4-enine + ATP = N-hexanoylsphing-4-enine 1-phosphate + ADP + H(+). The protein operates within lipid metabolism; glycerolipid metabolism. Functionally, lipid kinase that can phosphorylate both monoacylglycerol and diacylglycerol to form lysophosphatidic acid (LPA) and phosphatidic acid (PA), respectively. Does not phosphorylate sphingosine. Phosphorylates ceramide. Phosphorylates 1,2-dioleoylglycerol more rapidly than 2,3-dioleoylglycerol. Independently of its lipid kinase activity, acts as a component of the TIM22 complex. The TIM22 complex mediates the import and insertion of multi-pass transmembrane proteins into the mitochondrial inner membrane by forming a twin-pore translocase that uses the membrane potential as the external driving force. In the TIM22 complex, required for the import of a subset of metabolite carriers into mitochondria, such as ANT1/SLC25A4 and SLC25A24, while it is not required for the import of TIMM23. Overexpression increases the formation and secretion of LPA, resulting in transactivation of EGFR and activation of the downstream MAPK signaling pathway, leading to increased cell growth. The polypeptide is Acylglycerol kinase, mitochondrial (Homo sapiens (Human)).